The sequence spans 182 residues: Thioredoxin F-type, chloroplastic (182 aa).

Residues 1–22 are disordered; it reads MPLSLRLAPSPTALSPTTGGFS. The Thioredoxin domain maps to 52-177; it reads KRGDSSVVRC…LVAAIETARS (126 aa). Catalysis depends on nucleophile residues Cys102 and Cys105. Cys102 and Cys105 are joined by a disulfide.

Belongs to the thioredoxin family. Plant F-type subfamily. As to quaternary structure, forms a complex with heterodimeric ferredoxin-thioredoxin reductase (FTR) and ferredoxin.

It localises to the plastid. It is found in the chloroplast. Its function is as follows. Participates in various redox reactions through the reversible oxidation of the active center dithiol to a disulfide. The F form is known to activate a number of enzymes of the photosynthetic carbon cycle. This is Thioredoxin F-type, chloroplastic (TRXF) from Brassica napus (Rape).